A 589-amino-acid polypeptide reads, in one-letter code: Cytochrome P450 monooxygenase TRI13 (589 aa).

The signal sequence occupies residues Met1–Pro21. N-linked (GlcNAc...) asparagine glycans are attached at residues Asn52, Asn219, Asn243, and Asn366. Cys531 lines the heme pocket.

It belongs to the cytochrome P450 family. Heme serves as cofactor.

Its pathway is sesquiterpene biosynthesis; trichothecene biosynthesis. Its function is as follows. Cytochrome P450 monooxygenase; part of the core gene cluster that mediates the biosynthesis of trichothecenes, a very large family of chemically related bicyclic sesquiterpene compounds acting as mycotoxins, including T2-toxin. The biosynthesis of trichothecenes begins with the cyclization of farnesyl diphosphate to trichodiene and is catalyzed by the trichodiene synthase TRI5. Trichodiene undergoes a series of oxygenations catalyzed by the cytochrome P450 monooxygenase TRI4. TRI4 controls the addition of four oxygens at C-2, C-3, C-11, and the C-12, C-13-epoxide to form the intermediate isotrichotriol. Isotrichotriol then undergoes a non-enzymatic isomerization and cyclization to form isotrichodermol. During this process, the oxygen at the C-2 position becomes the pyran ring oxygen and the hydroxyl group at C-11 is lost. More complex type A trichothecenes are built by modifying isotrichodermol through a series of paired hydroxylation and acetylation or acylation steps. Isotrichodermol is converted to isotrichodermin by the acetyltransferase TRI101. TRI101 encodes a C-3 transacetylase that acts as a self-protection or resistance factor during biosynthesis and that the presence of a free C-3 hydroxyl group is a key component of Fusarium trichothecene phytotoxicity. A second hydroxyl group is added to C-15 by the trichothecene C-15 hydroxylase TRI11, producing 15-decalonectrin, which is then acetylated by TRI3, producing calonectrin. A third hydroxyl group is added at C-4 by the cytochrome P450 monooxygenase TRI13, converting calonectrin to 3,15-diacetoxyspirpenol, which is subsequently acetylated by the acetyltransferase TRI7. A fourth hydroxyl group is added to C-8 by the cytochrome P450 monooxygenase TRI1, followed by the addition of an isovaleryl moiety by TRI16. Finally, the acetyl group is removed from the C-3 position by the trichothecene C-3 esterase TRI8 to produce T-2 toxin. The sequence is that of Cytochrome P450 monooxygenase TRI13 from Fusarium sporotrichioides.